Here is a 650-residue protein sequence, read N- to C-terminus: MAAKSDGRLKMKKSSDVAFTPLQNSDHSGSVQGLAPGLPSGSGAEDEEAAGGGCCPDGGGCSRCCCCCAGSGGSAGSGGSGGVAGPGGGGAGSAALCLRLGREQRRYSLWDCLWILAAVAVYFADVGTDVWLAVDYYLRGQRWWFGLTLFFVVLGSLSVQVFSFRWFVHDFSTEDSATAAAASSCPQPGADCKTVVGGGSAAGEGEARPSTPQRQASNASKSNIAAANSGSNSSGATRASGKHRSASCSFCIWLLQSLIHILQLGQIWRYFHTIYLGIRSRQSGENDRWRFYWKMVYEYADVSMLHLLATFLESAPQLVLQLCIIVQTHSLQALQGFTAAASLVSLAWALASYQKALRDSRDDKKPISYMAVIIQFCWHFFTIAARVITFALFASVFQLYFGIFIVLHWCIMTFWIVHCETEFCITKWEEIVFDMVVGIIYIFSWFNVKEGRTRCRLFIYYFVILLENTALSALWYLYKAPQIADAFAIPALCVVFSSFLTGVVFMLMYYAFFHPNGPRFGQSPSCACEDPAAAFTLPPDVATSTLRSISNNRSVVSDRDQKFAERDGCVPVFQVRPTAPSTPSSRPPRIEESVIKIDLFRNRYPAWERHVLDRSLRKAILAFECSPSPPRLQYKDDALIQERLEYETTL.

Positions 1 to 15 (MAAKSDGRLKMKKSS) are enriched in basic and acidic residues. The disordered stretch occupies residues 1-44 (MAAKSDGRLKMKKSSDVAFTPLQNSDHSGSVQGLAPGLPSGSGA). A compositionally biased stretch (polar residues) spans 21–31 (PLQNSDHSGSV). 2 helical membrane-spanning segments follow: residues 114–134 (WILA…WLAV) and 144–164 (WFGL…VFSF). S200 bears the Phosphoserine mark. A disordered region spans residues 200–238 (SAAGEGEARPSTPQRQASNASKSNIAAANSGSNSSGATR). Residues 216–238 (ASNASKSNIAAANSGSNSSGATR) are compositionally biased toward low complexity. Transmembrane regions (helical) follow at residues 248–268 (CSFC…GQIW), 306–326 (HLLA…CIIV), 331–351 (LQAL…WALA), 365–385 (KPIS…TIAA), 396–418 (VFQL…WIVH), 428–448 (WEEI…WFNV), 457–477 (LFIY…LWYL), and 487–507 (FAIP…VFML).

Belongs to the XK family. In terms of assembly, homodimer; homodimerization takes place upon caspase cleavage. Interacts with the processed C-terminus of XRCC4 (protein XRCC4, C-terminus); interaction promotes the phospholipid scramblase activity. Undergoes proteolytic processing by caspase-3 (CASP3), caspase-6 (CASP6) and caspase-7 (CASP7) to generate the XK-related protein 4, processed form, leading to its activation.

The protein localises to the cell membrane. It catalyses the reaction a 1,2-diacyl-sn-glycero-3-phospho-L-serine(in) = a 1,2-diacyl-sn-glycero-3-phospho-L-serine(out). With respect to regulation, phospholipid scramblase activity is activated upon caspase cleavage to generate the XK-related protein 4, processed form. Does not act prior the onset of apoptosis. Its activity is regulated as follows. Homodimerizes upon caspase cleavage. Phospholipid scramblase activity is activated following interaction with the processed C-terminus of XRCC4 (protein XRCC4, C-terminus). Phospholipid scramblase that promotes phosphatidylserine exposure on apoptotic cell surface. Phosphatidylserine is a specific marker only present at the surface of apoptotic cells and acts as a specific signal for engulfment. This is XK-related protein 4 from Homo sapiens (Human).